Reading from the N-terminus, the 310-residue chain is p-hydroxybenzoic acid efflux pump subunit AaeA (310 aa).

A helical transmembrane segment spans residues Ala12–Tyr32.

It belongs to the membrane fusion protein (MFP) (TC 8.A.1) family.

The protein resides in the cell inner membrane. Functionally, forms an efflux pump with AaeB. The chain is p-hydroxybenzoic acid efflux pump subunit AaeA from Salmonella heidelberg (strain SL476).